Here is a 431-residue protein sequence, read N- to C-terminus: Gamma-glutamyl phosphate reductase (431 aa).

It belongs to the gamma-glutamyl phosphate reductase family.

It is found in the cytoplasm. The catalysed reaction is L-glutamate 5-semialdehyde + phosphate + NADP(+) = L-glutamyl 5-phosphate + NADPH + H(+). It functions in the pathway amino-acid biosynthesis; L-proline biosynthesis; L-glutamate 5-semialdehyde from L-glutamate: step 2/2. Its function is as follows. Catalyzes the NADPH-dependent reduction of L-glutamate 5-phosphate into L-glutamate 5-semialdehyde and phosphate. The product spontaneously undergoes cyclization to form 1-pyrroline-5-carboxylate. The chain is Gamma-glutamyl phosphate reductase from Beijerinckia indica subsp. indica (strain ATCC 9039 / DSM 1715 / NCIMB 8712).